A 592-amino-acid polypeptide reads, in one-letter code: Ferric-chelate reductase 1 (592 aa).

The chain crosses the membrane as a helical span at residues 2 to 22; that stretch reads AAPQITLSVLVIALLTCSVTA. Positions 13 to 179 constitute a Reelin domain; that stretch reads IALLTCSVTA…FTTPKATTQP (167 aa). 4 N-linked (GlcNAc...) asparagine glycosylation sites follow: Asn85, Asn308, Asn321, and Asn353. Residues 216–331 form the DOMON domain; the sequence is EPACVFLSFT…ESYYIFFAEG (116 aa). The region spanning 335 to 534 is the Cytochrome b561 domain; sequence DGRIFRHSQQ…IGTEVILEIH (200 aa). Residues 372–392 traverse the membrane as a helical segment; the sequence is AHGALMFVAWMTTVSIGVLVA. His373 and His414 together coordinate heme b. 5 helical membrane passes run 415–435, 446–466, 477–499, 515–535, and 569–589; these read RMLM…PFVY, HPYL…LATF, VFNW…AMFL, YAMM…EIHA, and VVLA…LSAI. Heme b is bound by residues His446 and His482.

Belongs to the FRRS1 family. It depends on heme b as a cofactor. Expressed in spleen, liver and kidney with low expression in brain. Localizes in adult brain to the choroid plexus of the fourth, third, and lateral ventricles and to ependymal cells that line the ventricles.

It localises to the membrane. Functionally, ferric-chelate reductases reduce Fe(3+) to Fe(2+) before its transport from the endosome to the cytoplasm. The protein is Ferric-chelate reductase 1 (FRRS1) of Mus musculus (Mouse).